A 335-amino-acid polypeptide reads, in one-letter code: Glycerol-3-phosphate dehydrogenase [NAD(P)+] (335 aa).

The NADPH site is built by tryptophan 11, arginine 30, and lysine 106. Residues lysine 106, glycine 135, and serine 137 each coordinate sn-glycerol 3-phosphate. An NADPH-binding site is contributed by alanine 139. Sn-glycerol 3-phosphate is bound by residues lysine 190, aspartate 243, serine 253, arginine 254, and asparagine 255. Lysine 190 acts as the Proton acceptor in catalysis. Arginine 254 is a binding site for NADPH. Residues valine 278 and glutamate 280 each coordinate NADPH.

The protein belongs to the NAD-dependent glycerol-3-phosphate dehydrogenase family.

The protein resides in the cytoplasm. The catalysed reaction is sn-glycerol 3-phosphate + NAD(+) = dihydroxyacetone phosphate + NADH + H(+). It catalyses the reaction sn-glycerol 3-phosphate + NADP(+) = dihydroxyacetone phosphate + NADPH + H(+). It participates in membrane lipid metabolism; glycerophospholipid metabolism. In terms of biological role, catalyzes the reduction of the glycolytic intermediate dihydroxyacetone phosphate (DHAP) to sn-glycerol 3-phosphate (G3P), the key precursor for phospholipid synthesis. This is Glycerol-3-phosphate dehydrogenase [NAD(P)+] from Paucimonas lemoignei (Pseudomonas lemoignei).